The primary structure comprises 293 residues: Protease HtpX (293 aa).

The next 2 membrane-spanning stretches (helical) occupy residues 4 to 24 (IALFLLTNLAVMVVFGLVLSL) and 34 to 54 (GLLIMALLFGFGGSFISLLMS). Position 139 (His139) interacts with Zn(2+). Glu140 is a catalytic residue. His143 is a binding site for Zn(2+). The next 2 helical transmembrane spans lie at 158–178 (VVNTFVIFISRILAQIAAGFM) and 193–213 (LIYFAVAMVLELVFGILASII). Zn(2+) is bound at residue Glu222.

This sequence belongs to the peptidase M48B family. The cofactor is Zn(2+).

It is found in the cell inner membrane. In Enterobacter sp. (strain 638), this protein is Protease HtpX.